A 320-amino-acid chain; its full sequence is Bifunctional ligase/repressor BirA (320 aa).

The H-T-H motif DNA-binding region spans 22 to 41 (GEQLGERLGMSRAAINKHIQ). The 189-residue stretch at 66-254 (LLDADRIHSQ…KLRAALELFE (189 aa)) folds into the BPL/LPL catalytic domain. Residues 89–91 (STN), Gln-112, 116–118 (RGR), and Lys-183 each bind biotin.

The protein belongs to the biotin--protein ligase family.

It carries out the reaction biotin + L-lysyl-[protein] + ATP = N(6)-biotinyl-L-lysyl-[protein] + AMP + diphosphate + H(+). Its function is as follows. Acts both as a biotin--[acetyl-CoA-carboxylase] ligase and a biotin-operon repressor. In the presence of ATP, BirA activates biotin to form the BirA-biotinyl-5'-adenylate (BirA-bio-5'-AMP or holoBirA) complex. HoloBirA can either transfer the biotinyl moiety to the biotin carboxyl carrier protein (BCCP) subunit of acetyl-CoA carboxylase, or bind to the biotin operator site and inhibit transcription of the operon. In Salmonella typhimurium (strain LT2 / SGSC1412 / ATCC 700720), this protein is Bifunctional ligase/repressor BirA.